Here is a 327-residue protein sequence, read N- to C-terminus: Putative ABC transporter ATP-binding protein MM_0887 (327 aa).

The disordered stretch occupies residues 1 to 44 (MSKSTPLKSSIIRADLPEQAEGRTGPETGKDPEKTGNSEGKTDT). The segment covering 28 to 44 (TGKDPEKTGNSEGKTDT) has biased composition (basic and acidic residues). In terms of domain architecture, ABC transporter spans 47–282 (IEIKDLCHRY…PALLRKAHLR (236 aa)). Position 81 to 88 (81 to 88 (GANGAGKS)) interacts with ATP.

It belongs to the ABC transporter superfamily.

The protein resides in the cell membrane. Functionally, probably part of an ABC transporter complex. Responsible for energy coupling to the transport system. The protein is Putative ABC transporter ATP-binding protein MM_0887 of Methanosarcina mazei (strain ATCC BAA-159 / DSM 3647 / Goe1 / Go1 / JCM 11833 / OCM 88) (Methanosarcina frisia).